The chain runs to 501 residues: Serine/threonine protein phosphatase 2A 55 kDa regulatory subunit B beta isoform (501 aa).

At M1 the chain carries N-acetylmethionine. WD repeat units lie at residues 34 to 73, 110 to 151, 220 to 258, 269 to 309, and 328 to 366; these read QEVDIISAIEFDKSGDHLATGDRGGRVVLFERTDTKDHGG, EIEE…IKKI, AHDYHINSISNSSDGETFISADDLRVNLWNLEISNQSFN, DLTE…LCDS, and EIIASISDIKFSKDGRYILSRDYMTLKLWDINMDSGPVA. Over residues 439 to 449 the composition is skewed to polar residues; sequence TPARPSRSIGS. Positions 439–466 are disordered; sequence TPARPSRSIGSMTRVVRRGSESPGTEAN. The WD 6 repeat unit spans residues 471-501; sequence DFTTKLLHMAWHPTENSIACAAANSLYMYYA.

This sequence belongs to the phosphatase 2A regulatory subunit B family. As to quaternary structure, PP2A consists of a common heteromeric enzyme, composed of a catalytic subunit (subunits C), a constant regulatory subunit (subunit A), and a variety of regulatory subunits such as subunits B (the R2/B/PR55/B55, R3/B''/PR72/PR130/PR59 and R5/B'/B56 families). Interacts with SIC/RON3. In terms of tissue distribution, expressed ubiquitously.

In terms of biological role, the B regulatory subunit may modulate substrate selectivity and catalytic activity, and may also direct the localization of the catalytic enzyme to a particular subcellular compartment. This Arabidopsis thaliana (Mouse-ear cress) protein is Serine/threonine protein phosphatase 2A 55 kDa regulatory subunit B beta isoform (PP2AB2).